We begin with the raw amino-acid sequence, 169 residues long: MLATRVFSLIGRRAISTSVCVRAHGSVVKSEDYALPSYVDRRDYPLPDVAHVKNLSASQKALKEKEKASWSSLSIDEKVELYRLKFKESFAEMNRSTNEWKTVVGAAMFFIGFTALLLIWEKHYVYGPIPHTFEEEWVAKQTKRMLDMKVAPIQGFSAKWDYDKNEWKK.

The N-terminal 22 residues, 1–22 (MLATRVFSLIGRRAISTSVCVR), are a transit peptide targeting the mitochondrion. Topologically, residues 23-98 (AHGSVVKSED…SFAEMNRSTN (76 aa)) are mitochondrial matrix. N6-acetyllysine; alternate is present on K29. Residue K29 is modified to N6-succinyllysine; alternate. K53 is subject to N6-acetyllysine. S56 and S58 each carry phosphoserine. N6-acetyllysine; alternate is present on K60. K60 is subject to N6-succinyllysine; alternate. K67 is subject to N6-acetyllysine. A helical transmembrane segment spans residues 99-124 (EWKTVVGAAMFFIGFTALLLIWEKHY). At 125–169 (VYGPIPHTFEEEWVAKQTKRMLDMKVAPIQGFSAKWDYDKNEWKK) the chain is on the mitochondrial intermembrane side.

It belongs to the cytochrome c oxidase IV family. Component of the cytochrome c oxidase (complex IV, CIV), a multisubunit enzyme composed of 14 subunits. The complex is composed of a catalytic core of 3 subunits MT-CO1, MT-CO2 and MT-CO3, encoded in the mitochondrial DNA, and 11 supernumerary subunits COX4I1 (or COX4I2), COX5A, COX5B, COX6A2 (or COX6A1), COX6B1 (or COX6B2), COX6C, COX7A1 (or COX7A2), COX7B, COX7C, COX8B and NDUFA4, which are encoded in the nuclear genome. The complex exists as a monomer or a dimer and forms supercomplexes (SCs) in the inner mitochondrial membrane with NADH-ubiquinone oxidoreductase (complex I, CI) and ubiquinol-cytochrome c oxidoreductase (cytochrome b-c1 complex, complex III, CIII), resulting in different assemblies (supercomplex SCI(1)III(2)IV(1) and megacomplex MCI(2)III(2)IV(2)). Interacts with PHB2; the interaction decreases in absence of SPHK2. Interacts with AFG1L. Interacts with ABCB7; this interaction allows the regulation of cellular iron homeostasis and cellular reactive oxygen species (ROS) levels in cardiomyocytes. Interacts with FLVCR2; this interaction occurs in the absence of heme and is disrupted upon heme binding. Interacts with IRGC.

The protein localises to the mitochondrion inner membrane. The protein operates within energy metabolism; oxidative phosphorylation. Its function is as follows. Component of the cytochrome c oxidase, the last enzyme in the mitochondrial electron transport chain which drives oxidative phosphorylation. The respiratory chain contains 3 multisubunit complexes succinate dehydrogenase (complex II, CII), ubiquinol-cytochrome c oxidoreductase (cytochrome b-c1 complex, complex III, CIII) and cytochrome c oxidase (complex IV, CIV), that cooperate to transfer electrons derived from NADH and succinate to molecular oxygen, creating an electrochemical gradient over the inner membrane that drives transmembrane transport and the ATP synthase. Cytochrome c oxidase is the component of the respiratory chain that catalyzes the reduction of oxygen to water. Electrons originating from reduced cytochrome c in the intermembrane space (IMS) are transferred via the dinuclear copper A center (CU(A)) of subunit 2 and heme A of subunit 1 to the active site in subunit 1, a binuclear center (BNC) formed by heme A3 and copper B (CU(B)). The BNC reduces molecular oxygen to 2 water molecules using 4 electrons from cytochrome c in the IMS and 4 protons from the mitochondrial matrix. The protein is Cytochrome c oxidase subunit 4 isoform 1, mitochondrial (COX4I1) of Bos taurus (Bovine).